The primary structure comprises 299 residues: ATP phosphoribosyltransferase (299 aa).

The protein belongs to the ATP phosphoribosyltransferase family. Long subfamily. Equilibrium between an active dimeric form, an inactive hexameric form and higher aggregates. Interconversion between the various forms is largely reversible and is influenced by the natural substrates and inhibitors of the enzyme. It depends on Mg(2+) as a cofactor.

The protein localises to the cytoplasm. The enzyme catalyses 1-(5-phospho-beta-D-ribosyl)-ATP + diphosphate = 5-phospho-alpha-D-ribose 1-diphosphate + ATP. It functions in the pathway amino-acid biosynthesis; L-histidine biosynthesis; L-histidine from 5-phospho-alpha-D-ribose 1-diphosphate: step 1/9. Its activity is regulated as follows. Feedback inhibited by histidine. Functionally, catalyzes the condensation of ATP and 5-phosphoribose 1-diphosphate to form N'-(5'-phosphoribosyl)-ATP (PR-ATP). Has a crucial role in the pathway because the rate of histidine biosynthesis seems to be controlled primarily by regulation of HisG enzymatic activity. The protein is ATP phosphoribosyltransferase of Pectobacterium atrosepticum (strain SCRI 1043 / ATCC BAA-672) (Erwinia carotovora subsp. atroseptica).